Reading from the N-terminus, the 111-residue chain is uncharacterized protein (111 aa).

Transmembrane regions (helical) follow at residues 7 to 27 (ILNIILALAVPIGLLFISMMI) and 53 to 73 (AFAMFIPLLIIALTLLVTFLH).

The protein localises to the cell membrane. This is an uncharacterized protein from Bacillus anthracis.